The chain runs to 225 residues: Protein-L-isoaspartate O-methyltransferase (225 aa).

Ser75 is an active-site residue.

The protein belongs to the methyltransferase superfamily. L-isoaspartyl/D-aspartyl protein methyltransferase family.

The protein localises to the cytoplasm. The enzyme catalyses [protein]-L-isoaspartate + S-adenosyl-L-methionine = [protein]-L-isoaspartate alpha-methyl ester + S-adenosyl-L-homocysteine. In terms of biological role, catalyzes the methyl esterification of L-isoaspartyl residues in peptides and proteins that result from spontaneous decomposition of normal L-aspartyl and L-asparaginyl residues. It plays a role in the repair and/or degradation of damaged proteins. The polypeptide is Protein-L-isoaspartate O-methyltransferase (Xanthomonas oryzae pv. oryzae (strain PXO99A)).